Reading from the N-terminus, the 271-residue chain is Adenosylcobinamide-GDP ribazoletransferase (271 aa).

Transmembrane regions (helical) follow at residues 4–24, 35–55, 58–78, 108–128, 135–155, 192–212, and 246–266; these read FLLA…GMSM, YLQT…AYLT, FLPS…ITGL, SLGI…YASI, VLFF…IAEI, FVLG…IGYI, and IIVL…YGGL.

It belongs to the CobS family. Requires Mg(2+) as cofactor.

Its subcellular location is the cell membrane. It catalyses the reaction alpha-ribazole + adenosylcob(III)inamide-GDP = adenosylcob(III)alamin + GMP + H(+). It carries out the reaction alpha-ribazole 5'-phosphate + adenosylcob(III)inamide-GDP = adenosylcob(III)alamin 5'-phosphate + GMP + H(+). It participates in cofactor biosynthesis; adenosylcobalamin biosynthesis; adenosylcobalamin from cob(II)yrinate a,c-diamide: step 7/7. Joins adenosylcobinamide-GDP and alpha-ribazole to generate adenosylcobalamin (Ado-cobalamin). Also synthesizes adenosylcobalamin 5'-phosphate from adenosylcobinamide-GDP and alpha-ribazole 5'-phosphate. The sequence is that of Adenosylcobinamide-GDP ribazoletransferase from Methanococcoides burtonii (strain DSM 6242 / NBRC 107633 / OCM 468 / ACE-M).